A 527-amino-acid polypeptide reads, in one-letter code: EGF domain-specific O-linked N-acetylglucosamine transferase (527 aa).

The first 19 residues, 1 to 19, serve as a signal peptide directing secretion; the sequence is MLMLLVFGVLLHEVPLSGQ. Positions 295 to 297 match the Required for optimal activity motif; the sequence is DYD. Residue asparagine 354 is glycosylated (N-linked (GlcNAc...) asparagine). Residues 524 to 527 carry the Prevents secretion from ER motif; sequence HDEL.

This sequence belongs to the glycosyltransferase 61 family. Widely expressed. Expressed in brain, heart, kidney, lung, skeletal muscles and thymus. Highest expression is observed in lung and the lowest in skeletal muscles.

Its subcellular location is the endoplasmic reticulum lumen. It carries out the reaction L-seryl-[protein] + UDP-N-acetyl-alpha-D-glucosamine = 3-O-(N-acetyl-beta-D-glucosaminyl)-L-seryl-[protein] + UDP + H(+). The catalysed reaction is L-threonyl-[protein] + UDP-N-acetyl-alpha-D-glucosamine = 3-O-(N-acetyl-beta-D-glucosaminyl)-L-threonyl-[protein] + UDP + H(+). Catalyzes the transfer of a single N-acetylglucosamine from UDP-GlcNAc to a serine or threonine residue in extracellular proteins resulting in their modification with a beta-linked N-acetylglucosamine (O-GlcNAc). Specifically glycosylates the Thr residue located between the fifth and sixth conserved cysteines of folded EGF-like domains. This is EGF domain-specific O-linked N-acetylglucosamine transferase (Eogt) from Mus musculus (Mouse).